Consider the following 484-residue polypeptide: UDP-glucose:undecaprenyl-phosphate glucose-1-phosphate transferase (484 aa).

5 consecutive transmembrane segments (helical) span residues 37–57, 59–79, 93–113, 122–142, and 299–319; these read MVVA…VPAA, YRVA…LFPL, VVLG…ALIV, GWVG…RTLL, and ILAV…AVGV.

It belongs to the bacterial sugar transferase family.

The protein resides in the cell inner membrane. It catalyses the reaction di-trans,octa-cis-undecaprenyl phosphate + UDP-alpha-D-glucose = alpha-D-glucosyl di-trans,octa-cis-undecaprenyl diphosphate + UMP. It functions in the pathway glycan biosynthesis; xanthan biosynthesis. Its function is as follows. Is the initiating enzyme for the synthesis of the exopolysaccharide xanthan. Catalyzes the transfer of the glucose-1-phosphate moiety from UDP-Glc onto the carrier lipid undecaprenyl phosphate (C55-P), forming a phosphoanhydride bond yielding to glucosyl-pyrophosphoryl-undecaprenol (Glc-PP-C55). This is UDP-glucose:undecaprenyl-phosphate glucose-1-phosphate transferase (gumD) from Xanthomonas campestris pv. campestris.